The following is a 411-amino-acid chain: Ornithine cyclodeaminase (411 aa).

NAD(+) contacts are provided by N236, A237, D315, T347, M348, L349, H350, D368, D391, and V392.

This sequence belongs to the AgrE/ArgZ ornithine cyclodeaminase family. The cofactor is NAD(+).

The catalysed reaction is L-ornithine = L-proline + NH4(+). Catalyzes the conversion of ornithine to proline, with the release of ammonia. The polypeptide is Ornithine cyclodeaminase (Methanothermobacter thermautotrophicus (strain ATCC 29096 / DSM 1053 / JCM 10044 / NBRC 100330 / Delta H) (Methanobacterium thermoautotrophicum)).